Here is an 83-residue protein sequence, read N- to C-terminus: ATP synthase subunit c 2 (83 aa).

Transmembrane regions (helical) follow at residues 8–28 and 58–78; these read IASI…PALG and LAMI…LLFA.

This sequence belongs to the ATPase C chain family. In terms of assembly, F-type ATPases have 2 components, F(1) - the catalytic core - and F(0) - the membrane proton channel. F(1) has five subunits: alpha(3), beta(3), gamma(1), delta(1), epsilon(1). F(0) has four main subunits: a(1), b(1), b'(1) and c(10-14). The alpha and beta chains form an alternating ring which encloses part of the gamma chain. F(1) is attached to F(0) by a central stalk formed by the gamma and epsilon chains, while a peripheral stalk is formed by the delta, b and b' chains.

Its subcellular location is the cell inner membrane. F(1)F(0) ATP synthase produces ATP from ADP in the presence of a proton or sodium gradient. F-type ATPases consist of two structural domains, F(1) containing the extramembraneous catalytic core and F(0) containing the membrane proton channel, linked together by a central stalk and a peripheral stalk. During catalysis, ATP synthesis in the catalytic domain of F(1) is coupled via a rotary mechanism of the central stalk subunits to proton translocation. Functionally, key component of the F(0) channel; it plays a direct role in translocation across the membrane. A homomeric c-ring of between 10-14 subunits forms the central stalk rotor element with the F(1) delta and epsilon subunits. In Cereibacter sphaeroides (strain ATCC 17029 / ATH 2.4.9) (Rhodobacter sphaeroides), this protein is ATP synthase subunit c 2.